The following is a 69-amino-acid chain: Conotoxin Lt5.7 (69 aa).

The first 19 residues, 1–19 (MLCLPVFIILLLLASPAAP), serve as a signal peptide directing secretion. Residues 20–54 (KSLETRIQNDLIRAGLTDADLKTEKGFLSGLLNVA) constitute a propeptide that is removed on maturation.

Belongs to the conotoxin T superfamily. Post-translationally, contains 2 disulfide bonds that can be either 'C1-C3, C2-C4' or 'C1-C4, C2-C3', since these disulfide connectivities have been observed for conotoxins with cysteine framework V (for examples, see AC P0DQQ7 and AC P81755). In terms of tissue distribution, expressed by the venom duct.

It is found in the secreted. This Conus litteratus (Lettered cone) protein is Conotoxin Lt5.7.